The following is an 80-amino-acid chain: RNA-binding protein Hfq (80 aa).

Residues 9–68 (EPFLNALRKERIPVSIYLVNGIKLQGQIDSFDQFVVLLKNTVSQMVYKHAISTIVPSRPV) enclose the Sm domain.

This sequence belongs to the Hfq family. Homohexamer.

Functionally, RNA chaperone that binds small regulatory RNA (sRNAs) and mRNAs to facilitate mRNA translational regulation in response to envelope stress, environmental stress and changes in metabolite concentrations. Also binds with high specificity to tRNAs. The chain is RNA-binding protein Hfq from Thioalkalivibrio sulfidiphilus (strain HL-EbGR7).